The sequence spans 317 residues: Proline-rich protein 2 (317 aa).

The first 16 residues, 1 to 16 (MLVVLFTVALLALSSA), serve as a signal peptide directing secretion. The tract at residues 15 to 317 (SAQGPREELQ…PPQGRPQGPQ (303 aa)) is disordered. The segment covering 32 to 44 (QRPPPSGSQPRPP) has biased composition (pro residues). Residue Asn46 is glycosylated (N-linked (GlcNAc...) asparagine). Pro residues-rich tracts occupy residues 51–183 (GPPP…PPAG) and 204–288 (QSPP…PTQG). The segment covering 289 to 305 (PHPTGGPQQTPPLAGNP) has biased composition (low complexity). Residues 306 to 317 (QGPPQGRPQGPQ) show a composition bias toward pro residues.

Its subcellular location is the secreted. The polypeptide is Proline-rich protein 2 (Prp2) (Mus musculus (Mouse)).